Here is a 1477-residue protein sequence, read N- to C-terminus: Oligomycin resistance ATP-dependent permease YOR1 (1477 aa).

Positions 1-48 (MTITVGDAVSETELENKSQNVVLSPKASASSDISTDVDKDTSSSWDDK) are disordered. The Cytoplasmic segment spans residues 1–206 (MTITVGDAVS…RALLFTFKKQ (206 aa)). S10 and S24 each carry phosphoserine. Residues 36-48 (DVDKDTSSSWDDK) are compositionally biased toward basic and acidic residues. T53 is subject to Phosphothreonine. A Diacidic ER export motif DxE motif is present at residues 71–73 (DIE). Residues 207–227 (YFMSIVFAILANCTSGFNPMI) traverse the membrane as a helical segment. Residues 207-493 (YFMSIVFAIL…LPIAIGTGID (287 aa)) form the ABC transmembrane type-1 1 domain. Topologically, residues 228–249 (TKRLIEFVEEKAIFHSMHVNKG) are extracellular. Residues 250 to 270 (IGYAIGACLMMFVNGLTFNHF) form a helical membrane-spanning segment. The Cytoplasmic portion of the chain corresponds to 271–328 (FHTSQLTGVQAKSILTKAAMKKMFNASNYARHCFPNGKVTSFVTTDLARIEFALSFQP). Residues 329-349 (FLAGFPAILAICIVLLIVNLG) form a helical membrane-spanning segment. The Extracellular portion of the chain corresponds to 350-357 (PIALVGIG). The helical transmembrane segment at 358–370 (IFFGGFFISLFAF) threads the bilayer. Over 371–433 (KLILGFRIAA…KVRKMQLSRN (63 aa)) the chain is Cytoplasmic. Residues 434–454 (FLIAMAMSLPSIASLVTFLAM) form a helical membrane-spanning segment. At 455–478 (YKVNKGGRQPGNIFASLSLFQVLS) the chain is on the extracellular side. The chain crosses the membrane as a helical span at residues 479-499 (LQMFFLPIAIGTGIDMIIGLG). The Cytoplasmic segment spans residues 500–615 (RLQSLLEAPE…DLNFDIKKGE (116 aa)). A disordered region spans residues 552–595 (KGEAKDEGKKNKKKRKDTWGKPSASTNKAKRLDNMLKDRDGPED). The span at 581-595 (KRLDNMLKDRDGPED) shows a compositional bias: basic and acidic residues. Residues 581 to 808 (KRLDNMLKDR…NQTLINLLQF (228 aa)) enclose the ABC transporter 1 domain. The chain crosses the membrane as a helical span at residues 616–636 (FIMITGPIGTGKSSLLNAMAG). An ATP-binding site is contributed by 621–628 (GPIGTGKS). Topologically, residues 637 to 892 (SMRKTDGKVE…EYIKAAVGKW (256 aa)) are extracellular. N661, N759, and N799 each carry an N-linked (GlcNAc...) asparagine glycan. Residues 893-913 (GFIALPLYAILVVGTTFCSLF) traverse the membrane as a helical segment. The region spanning 897–1175 (LPLYAILVVG…ILRAMTQTEN (279 aa)) is the ABC transmembrane type-1 2 domain. The Cytoplasmic portion of the chain corresponds to 914-940 (SSVWLSYWTENKFKNRPPSFYMGLYSF). A helical transmembrane segment spans residues 941-961 (FVFAAFIFMNGQFTILCAMGI). At 962–1027 (MASKWLNLRA…ANIVGVCVMC (66 aa)) the chain is on the extracellular side. The chain crosses the membrane as a helical span at residues 1028-1048 (IVYLPWFAIAIPFLLVIFVLI). Topologically, residues 1049-1117 (ADHYQSSGRE…GYLVVVLQRW (69 aa)) are cytoplasmic. Residues 1118-1138 (VGIFLDMVAIAFALIITLLCV) form a helical membrane-spanning segment. The Extracellular segment spans residues 1139–1141 (TRA). The helical transmembrane segment at 1142–1162 (FPISAASVGVLLTYVLQLPGL) threads the bilayer. Over 1163–1477 (LNTILRAMTQ…IVENDFENRS (315 aa)) the chain is Cytoplasmic. In terms of domain architecture, ABC transporter 2 spans 1213-1464 (IIFENVDFAY…EDSIFRSMCS (252 aa)). Residue 1247-1254 (GRTGAGKS) participates in ATP binding.

This sequence belongs to the ABC transporter superfamily. ABCC family. Conjugate transporter (TC 3.A.1.208) subfamily.

Its subcellular location is the cell membrane. The catalysed reaction is a 1,2-diacyl-sn-glycero-3-phosphoethanolamine(in) + ATP + H2O = a 1,2-diacyl-sn-glycero-3-phosphoethanolamine(out) + ADP + phosphate + H(+). The enzyme catalyses Cd(2+)(in) + ATP + H2O = Cd(2+)(out) + ADP + phosphate + H(+). It catalyses the reaction an S-substituted glutathione(in) + ATP + H2O = an S-substituted glutathione(out) + ADP + phosphate + H(+). Its function is as follows. Functions as a pleiotropic drug pump at the plasma membrane to clear toxic substances from the cytosol. Organic anion transporter involved in the detoxification of a wide range of toxic environmental organic anions that contain carboxyl groups. Required for tolerance to reveromycin A, tautomycin and leptomycin B. Required for oligomycin resistance. Required for rhodamine B resistance. Mediates the ATP-dependent efflux of rhodamine B. Involved in cadmium detoxification. Displays an energy-dependent efflux of cadmium and glutathione, suggesting that YOR1 transports both compounds as a bis-glutathionato-cadmium Cd-(GS)(2) complex. Confers resistance to rhodamine 6G and to doxorubicin. The protein is Oligomycin resistance ATP-dependent permease YOR1 of Saccharomyces cerevisiae (strain ATCC 204508 / S288c) (Baker's yeast).